Consider the following 174-residue polypeptide: Transcriptional repressor NrdR (174 aa).

The segment at 3-34 (CPFCQHNDTRVIDSRVSEDGTTIRRRRECEAC) is a zinc-finger region. An ATP-cone domain is found at 49 to 139 (PTVVKSDGGR…VYRSFQDVAD (91 aa)).

This sequence belongs to the NrdR family. Zn(2+) is required as a cofactor.

Its function is as follows. Negatively regulates transcription of bacterial ribonucleotide reductase nrd genes and operons by binding to NrdR-boxes. The sequence is that of Transcriptional repressor NrdR from Xanthomonas axonopodis pv. citri (strain 306).